Reading from the N-terminus, the 433-residue chain is Histidine--tRNA ligase (433 aa).

It belongs to the class-II aminoacyl-tRNA synthetase family. As to quaternary structure, homodimer.

Its subcellular location is the cytoplasm. It catalyses the reaction tRNA(His) + L-histidine + ATP = L-histidyl-tRNA(His) + AMP + diphosphate + H(+). The polypeptide is Histidine--tRNA ligase (Blochmanniella floridana).